We begin with the raw amino-acid sequence, 487 residues long: N-succinylglutamate 5-semialdehyde dehydrogenase (487 aa).

221 to 226 is an NAD(+) binding site; that stretch reads GSSRTG. Residues E244 and C278 contribute to the active site.

It belongs to the aldehyde dehydrogenase family. AstD subfamily.

It carries out the reaction N-succinyl-L-glutamate 5-semialdehyde + NAD(+) + H2O = N-succinyl-L-glutamate + NADH + 2 H(+). It functions in the pathway amino-acid degradation; L-arginine degradation via AST pathway; L-glutamate and succinate from L-arginine: step 4/5. Catalyzes the NAD-dependent reduction of succinylglutamate semialdehyde into succinylglutamate. In Pseudomonas putida (strain GB-1), this protein is N-succinylglutamate 5-semialdehyde dehydrogenase.